The following is a 1274-amino-acid chain: Enamelin (1274 aa).

The N-terminal stretch at 1-38 (MLLLQCRNPTSPPKPCGLVPNVKMSLLVFLGLLGVSAA) is a signal peptide. Pro residues predominate over residues 103 to 115 (PVPNGWQQPPMPN). 5 disordered regions span residues 103 to 413 (PVPN…VGAN), 476 to 610 (IGAN…NNPN), 668 to 700 (PFQS…KHFP), 712 to 734 (LPPL…YGSR), and 753 to 814 (YIKS…EEMN). Polar residues predominate over residues 117–127 (PSKTDQTQETA). Residues 128-142 (KPNQTNPQEPQPQKQ) show a composition bias toward low complexity. Residue Asn-130 is glycosylated (N-linked (GlcNAc...) asparagine). Residues 143–158 (PLKEPPNEAARAKDDA) show a composition bias toward basic and acidic residues. Over residues 174–185 (YPQPPWPIPQRG) the composition is skewed to pro residues. Phosphoserine is present on residues Ser-196 and Ser-219. Residues 225 to 239 (DYEKPKEKDPPKPED) show a composition bias toward basic and acidic residues. Residues 249–272 (ASTNSTVPDANATQSIPEGGNDTS) show a composition bias toward polar residues. N-linked (GlcNAc...) asparagine glycans are attached at residues Asn-252, Asn-259, and Asn-269. Residues 273-287 (PIGNTGPGPNAGNNP) show a composition bias toward low complexity. N-linked (GlcNAc...) asparagine glycosylation occurs at Asn-300. Positions 318-330 (PNIYENYPYPNYP) are enriched in low complexity. Polar residues-rich tracts occupy residues 331–344 (SERQ…QGPR), 486–503 (SIGT…TNPA), 522–549 (TNPS…QASN), and 565–574 (VTVSHNMKTQ). Positions 575–587 (NPKEKSLGQKERT) are enriched in basic and acidic residues. Over residues 588–598 (VTPTKDASNPW) the composition is skewed to polar residues. Residues 715-727 (LKEDYGRQDENLR) show a composition bias toward basic and acidic residues. Over residues 753 to 766 (YIKSNPWDKSSPST) the composition is skewed to polar residues. Acidic residues predominate over residues 787-801 (QYNEEDPIDPNEDES). Asn-1066 is a glycosylation site (N-linked (GlcNAc...) asparagine). 2 disordered regions span residues 1071 to 1097 (KLTA…PYSG) and 1109 to 1128 (SEAS…DLGG).

In terms of processing, phosphorylated by FAM20C in vitro. In terms of tissue distribution, expressed in developing teeth.

The protein localises to the secreted. It is found in the extracellular space. Its subcellular location is the extracellular matrix. Its function is as follows. Involved in the mineralization and structural organization of enamel. Involved in the extension of enamel during the secretory stage of dental enamel formation. This is Enamelin (Enam) from Mus musculus (Mouse).